The following is a 322-amino-acid chain: Tropinone reductase homolog At2g29260, chloroplastic (322 aa).

The transit peptide at methionine 1–threonine 61 directs the protein to the chloroplast. Residue leucine 74 to histidine 98 coordinates NADP(+). Serine 207 contacts substrate.

This sequence belongs to the short-chain dehydrogenases/reductases (SDR) family. SDR65C subfamily.

The protein resides in the plastid. It localises to the chloroplast. In Arabidopsis thaliana (Mouse-ear cress), this protein is Tropinone reductase homolog At2g29260, chloroplastic.